A 280-amino-acid polypeptide reads, in one-letter code: Type II restriction enzyme MboI (280 aa).

Belongs to the DpnII type II restriction endonuclease family.

It carries out the reaction Endonucleolytic cleavage of DNA to give specific double-stranded fragments with terminal 5'-phosphates.. Its function is as follows. A P subtype restriction enzyme that recognizes the double-stranded unmethylated sequence 5'-GATC-3' and cleaves before G-1. This Moraxella bovis protein is Type II restriction enzyme MboI (mboIR).